Consider the following 69-residue polypeptide: UPF0337 protein RB0906 (69 aa).

It belongs to the UPF0337 (CsbD) family.

The polypeptide is UPF0337 protein RB0906 (Rhizobium meliloti (strain 1021) (Ensifer meliloti)).